The sequence spans 273 residues: MVIVRCKPTSPGRRHVVKVICPNLYKGRPIASLLQKKVKTGGRNNYGRITTRHIGGGHKKLYRCIDFKRRYDNVPAVVQRIEYDPNRSSNIILILYKNGKRSYILEPKGIKVGDIIESGNLVPIKLGNALPIKKIPIGTILHNIEIKSGKGGQIARSAGSYAQLISKENKYVVIRLRSGELRKIHIECRATIGEVGNSEHMLRILGKAGASRRYGIRPTVRGTAMNPVDHPHGGGEGRNFGKHPVSPWGLKTKGKKTRRNKRTERFIVRHRNK.

The tract at residues 221 to 263 is disordered; it reads RGTAMNPVDHPHGGGEGRNFGKHPVSPWGLKTKGKKTRRNKRT. Residues 252-263 show a composition bias toward basic residues; the sequence is TKGKKTRRNKRT.

Belongs to the universal ribosomal protein uL2 family. In terms of assembly, part of the 50S ribosomal subunit. Forms a bridge to the 30S subunit in the 70S ribosome.

Its function is as follows. One of the primary rRNA binding proteins. Required for association of the 30S and 50S subunits to form the 70S ribosome, for tRNA binding and peptide bond formation. It has been suggested to have peptidyltransferase activity; this is somewhat controversial. Makes several contacts with the 16S rRNA in the 70S ribosome. This chain is Large ribosomal subunit protein uL2, found in Buchnera aphidicola subsp. Cinara cedri (strain Cc).